The chain runs to 1003 residues: MATPGPRDIPLLPGSPRRLSPQAGSRGGQGPKHGQQCLKMPGPRAPGLQGGSNRDPGQPCGGESTRSSSVINNYLDANEPVSLEARLSRMHFHDSQRKVDYVLAYHYRKRGVHLAQGFPGHSLAIVSNGETGKEPHAGGPGDIELGPLDALEEERKEQREEFEHNLMEAGLELEKDLENKSQGSIFVRIHAPWQVLAREAEFLKIKVPTKKEMYEIKAGGSIAKKFSAALQKLSSHLQPRVPEHSNNKMKNLSYPFSREKMYLYNIQEKDTFFDNATRSRIVHEILKRTACSRANNTMGINSLIANNIYEAAYPLHDGEYDSPEDDMNDRKLLYQEWARYGVFYKFQPIDLIRKYFGEKIGLYFAWLGLYTSFLIPSSVIGVIVFLYGCATIEEDIPSREMCDQQNAFTMCPLCDKSCDYWNLSSACGTAQASHLFDNPATVFFSIFMALWATMFLENWKRLQMRLGYFWDLTGIEEEEERAQEHSRPEYETKVREKMLKESNQSAVQKLETNTTECGDEDDEDKLTWKDRFPGYLMNFASILFMIALTFSIVFGVIVYRITTAAALSLNKATRSNVRVTVTATAVIINLVVILILDEIYGAVAKWLTKIEVPKTEQTFEERLILKAFLLKFVNAYSPIFYVAFFKGRFVGRPGSYVYVFDGYRMEECAPGGCLMELCIQLSIIMLGKQLIQNNIFEIGVPKLKKLFRKLKDETEAGETDSAHSKHPEQWDLDYSLEPYTGLTPEYMEMIIQFGFVTLFVASFPLAPVFALLNNVIEVRLDAKKFVTELRRPDAVRTKDIGIWFDILSGIGKFSVISNAFVIAITSDFIPRLVYQYSYSHNGTLHGFVNHTLSFFNVSQLKEGTQPENSQFDQEVQFCRFKDYREPPWAPNPYEFSKQYWFILSARLAFVIIFQNLVMFLSVLVDWMIPDIPTDISDQIKKEKSLLVDFFLKEEHEKLKLMDEPALRSPGGGDRSRSRAASSAPSGQSQLGSMMSSGSQHTNV.

Positions 1 to 68 (MATPGPRDIP…PCGGESTRSS (68 aa)) are disordered. At 1–365 (MATPGPRDIP…FGEKIGLYFA (365 aa)) the chain is on the cytoplasmic side. The span at 10–21 (PLLPGSPRRLSP) shows a compositional bias: low complexity. Residues 366–386 (WLGLYTSFLIPSSVIGVIVFL) traverse the membrane as a helical segment. Over 387 to 434 (YGCATIEEDIPSREMCDQQNAFTMCPLCDKSCDYWNLSSACGTAQASH) the chain is Extracellular. The N-linked (GlcNAc...) asparagine glycan is linked to Asn422. A helical transmembrane segment spans residues 435–455 (LFDNPATVFFSIFMALWATMF). The Cytoplasmic portion of the chain corresponds to 456–538 (LENWKRLQMR…KDRFPGYLMN (83 aa)). The helical transmembrane segment at 539–559 (FASILFMIALTFSIVFGVIVY) threads the bilayer. At 560 to 582 (RITTAAALSLNKATRSNVRVTVT) the chain is on the extracellular side. The chain crosses the membrane as a helical span at residues 583–603 (ATAVIINLVVILILDEIYGAV). The Cytoplasmic portion of the chain corresponds to 604-623 (AKWLTKIEVPKTEQTFEERL). The chain crosses the membrane as a helical span at residues 624 to 644 (ILKAFLLKFVNAYSPIFYVAF). Topologically, residues 645-748 (FKGRFVGRPG…YTGLTPEYME (104 aa)) are extracellular. A helical membrane pass occupies residues 749–769 (MIIQFGFVTLFVASFPLAPVF). The Cytoplasmic portion of the chain corresponds to 770–801 (ALLNNVIEVRLDAKKFVTELRRPDAVRTKDIG). The chain crosses the membrane as a helical span at residues 802–822 (IWFDILSGIGKFSVISNAFVI). Residues 823 to 907 (AITSDFIPRL…QYWFILSARL (85 aa)) are Extracellular-facing. N-linked (GlcNAc...) asparagine glycans are attached at residues Asn841, Asn849, and Asn856. Residues 908–928 (AFVIIFQNLVMFLSVLVDWMI) form a helical membrane-spanning segment. Residues 929–1003 (PDIPTDISDQ…MSSGSQHTNV (75 aa)) lie on the Cytoplasmic side of the membrane. The interval 961-1003 (MDEPALRSPGGGDRSRSRAASSAPSGQSQLGSMMSSGSQHTNV) is disordered. Residues 978-1003 (RAASSAPSGQSQLGSMMSSGSQHTNV) are compositionally biased toward low complexity. The DLG4 binding (PDZ) signature appears at 1001–1003 (TNV).

Belongs to the anoctamin family. In terms of assembly, homodimer. Component of a presynaptic protein complex recruited to specialized plasma membrane domains of photoreceptors. Interacts with DLG4 by its C-terminal region. As to expression, retina, especially in the photoreceptor synaptic terminals.

Its subcellular location is the cell membrane. It catalyses the reaction chloride(in) = chloride(out). With respect to regulation, channel activity is repressed by chloride inhibitors; strongly by niflumic acid (NFA), partially by flufenamic acid (FFA), and only slightly by meclofenamic acid (MFA), 5-Nitro-2-(3-phenylpropylamino)benzoic acid (NPPB), 4-acetamido-4'-isothiocyanato-stilben-2,2'-disulfonate (SITS), and 4,4'-diisothiocyanatostilbene-2,2'-disulfonic acid (DIDS). Calcium-activated chloride channel (CaCC) which may play a role in olfactory signal transduction. Odorant molecules bind to odor-sensing receptors (OSRs), leading to an increase in calcium entry that activates CaCC current which amplifies the depolarization of the OSR cells, ANO2 seems to be the underlying chloride channel involved in this process. May mediate light perception amplification in retina. The polypeptide is Anoctamin-2 (ANO2) (Homo sapiens (Human)).